Reading from the N-terminus, the 964-residue chain is uncharacterized protein (964 aa).

Residues 97 to 117 (DSESDVGSDAESDAESDAESD) show a composition bias toward acidic residues. Residues 97 to 208 (DSESDVGSDA…SNSIDNESES (112 aa)) form a disordered region. Positions 121–148 (HTQNNTNTPINNITLINLDSSNNSTQSD) are enriched in low complexity. Residues 149 to 163 (NESDNESDNESDNES) show a composition bias toward acidic residues. Over residues 192-203 (NSDNIGNSNSID) the composition is skewed to low complexity.

This is an uncharacterized protein from Acanthamoeba polyphaga (Amoeba).